Here is a 522-residue protein sequence, read N- to C-terminus: Transcription factor SPT20 homolog (522 aa).

Ser284 bears the Phosphoserine mark. Disordered stretches follow at residues Asp361 to Asn380 and Pro408 to Ser522. The span at Ser412–Ser425 shows a compositional bias: low complexity. Residues Thr433–Val442 show a composition bias toward polar residues. The span at Ser458–Asn467 shows a compositional bias: low complexity. A compositionally biased stretch (pro residues) spans Pro481–Ile492. A Phosphothreonine modification is found at Thr482. Low complexity predominate over residues Leu506 to Ser522. Ser507 and Ser512 each carry phosphoserine.

This sequence belongs to the SPT20 family. Interacts with ATG9A. Interacts with MAPK14.

Required for MAP kinase p38 (MAPK11, MAPK12, MAPK13 and/or MAPK14) activation during gastrulation. Required for down-regulation of E-cadherin during gastrulation by regulating E-cadherin protein level downstream from NCK-interacting kinase (NIK) and independently of the regulation of transcription by FGF signaling and Snail. Required for starvation-induced ATG9A trafficking during autophagy. The polypeptide is Transcription factor SPT20 homolog (SUPT20H) (Pongo abelii (Sumatran orangutan)).